Here is a 172-residue protein sequence, read N- to C-terminus: DNA-directed RNA polymerase II subunit rpb7 (172 aa).

Belongs to the eukaryotic RPB7/RPC8 RNA polymerase subunit family. Component of the RNA polymerase II (Pol II) complex consisting of 12 subunits. RPB4 and RPB7 form a subcomplex that protrudes from the 10-subunit Pol II core complex.

Its subcellular location is the nucleus. Functionally, DNA-dependent RNA polymerase catalyzes the transcription of DNA into RNA using the four ribonucleoside triphosphates as substrates. Component of RNA polymerase II which synthesizes mRNA precursors and many functional non-coding RNAs. Pol II is the central component of the basal RNA polymerase II transcription machinery. It is composed of mobile elements that move relative to each other. RPB7 is part of a subcomplex with RPB4 that binds to a pocket formed by RPB1, RPB2 and RPB6 at the base of the clamp element. The RPB4-RPB7 subcomplex seems to lock the clamp via RPB7 in the closed conformation thus preventing double-stranded DNA to enter the active site cleft. The RPB4-RPB7 subcomplex binds single-stranded DNA and RNA. The protein is DNA-directed RNA polymerase II subunit rpb7 (polr2g) of Dictyostelium discoideum (Social amoeba).